The following is a 317-amino-acid chain: Glucokinase (317 aa).

6–12 lines the ATP pocket; that stretch reads GVDIGGT.

This sequence belongs to the ROK (NagC/XylR) family. In terms of assembly, homooligomer (possibly a homotetramer). Alternatively, it may form a heterotetramer of two glucokinase subunits with two ORF2 (AC P40182) proteins.

Its subcellular location is the cytoplasm. The enzyme catalyses D-glucose + ATP = D-glucose 6-phosphate + ADP + H(+). Functionally, a probable glucose kinase. Required for glucose repression of many different genes, restores glucose kinase activity in E.coli glk mutants. The protein is Glucokinase (glkA) of Streptomyces coelicolor (strain ATCC BAA-471 / A3(2) / M145).